Reading from the N-terminus, the 418-residue chain is Protease LasA (418 aa).

The first 31 residues, 1-31 (MQHKRSRALASPRSPFLFALLALAVGGTANA), serve as a signal peptide directing secretion. A propeptide spanning residues 32–236 (HDDGLPAFRY…ARQLQAKAAL (205 aa)) is cleaved from the precursor. Zn(2+) contacts are provided by His-259 and Asp-272. Cysteines 301 and 347 form a disulfide. Residues His-317 and His-356 each act as proton donor/acceptor in the active site. Position 358 (His-358) interacts with Zn(2+). The cysteines at positions 391 and 406 are disulfide-linked.

Belongs to the peptidase M23A family. Zn(2+) is required as a cofactor.

Its subcellular location is the secreted. Involved in proteolysis and elastolysis (degradation of the host protein elastin). Has staphylolytic activity (degrades pentaglycine cross-links in cell wall peptidoglycan), preferring Gly-Gly-|-X substrates where X is Ala or Gly. Enhances the elastolytic but not proteolytic activity of elastase (lasB) and elastolytic activity of other proteases. Degradation of elastin is likely to contribute to the pathogenicity of P.aeruginosa. This chain is Protease LasA (lasA), found in Pseudomonas aeruginosa (strain UCBPP-PA14).